Here is a 171-residue protein sequence, read N- to C-terminus: 3-hydroxydecanoyl-[acyl-carrier-protein] dehydratase (171 aa).

Residue H71 is part of the active site.

The protein belongs to the thioester dehydratase family. FabA subfamily. In terms of assembly, homodimer.

The protein localises to the cytoplasm. The enzyme catalyses a (3R)-hydroxyacyl-[ACP] = a (2E)-enoyl-[ACP] + H2O. The catalysed reaction is (3R)-hydroxydecanoyl-[ACP] = (2E)-decenoyl-[ACP] + H2O. It catalyses the reaction (2E)-decenoyl-[ACP] = (3Z)-decenoyl-[ACP]. It functions in the pathway lipid metabolism; fatty acid biosynthesis. In terms of biological role, necessary for the introduction of cis unsaturation into fatty acids. Catalyzes the dehydration of (3R)-3-hydroxydecanoyl-ACP to E-(2)-decenoyl-ACP and then its isomerization to Z-(3)-decenoyl-ACP. Can catalyze the dehydratase reaction for beta-hydroxyacyl-ACPs with saturated chain lengths up to 16:0, being most active on intermediate chain length. This is 3-hydroxydecanoyl-[acyl-carrier-protein] dehydratase from Hamiltonella defensa subsp. Acyrthosiphon pisum (strain 5AT).